Here is a 700-residue protein sequence, read N- to C-terminus: MEALLEGIQNRGHSGGFLTSCEAELQELMKQIDIMVAHKKSEWEGQTHALETCLDIRDRELKALRSQLDMKHKEVGILHQQIEEHEKTKQEMAMEYKEELLKLQEELSRLKRSYEKLQKKQLREFRGNTKSFREDRSEIERLTGKIEEFRQKSLDWEKQRLIYQQQVSSLEAQRKALAEQSEIIQAQLANRKQKLESVELSSQSEIQHLNSKLERAKDTICANELEIERLNIRVNDLMGTNMTILQDHRQKEEKLRESEKLLEALQEEQKELKASLQSQETFILEAKMQEKLQTTLKAVGTQQSVERPLEDCQKERKYSSPGQGVLDNVLSQLDFSHSSEELLQAEVTRLEGSLESVSATCKQLSQELMEKYEELKRMEGHNNEYRTEIKKLKEQILQADQTYSSALEGMKMEISQLTRELHQRDITIASAKCSSSDMEKQLKAEMQKAEEKAVEHKEILSQLESLKLENHRLSETVMKLELGLHEAKEISLADLQENYIEALNKLVSENQQLQKDLMSTKSELEHATNMCKKKDGEIFNPAHSRAAGFKNAELKPIHGQHRHDGIKTEQYKTGHHSPRGQTLDSIDPVARGPSPLSSHISPGSSTVSLPSNFLFEAHSLPSVLDINDVNFSDSLSDCMNDQEEFVSSGSLPTSPLGSIATRFLEEEELRSHHILERLDAHIEELKRESEKTVRQFTALV.

The residue at position 1 (methionine 1) is an N-acetylmethionine. Coiled coils occupy residues 73 to 283 (KEVG…ETFI) and 343 to 533 (LQAE…MCKK). Phosphoserine occurs at positions 278, 488, and 492. Positions 570 to 603 (QYKTGHHSPRGQTLDSIDPVARGPSPLSSHISPG) are disordered. Low complexity predominate over residues 593–603 (PSPLSSHISPG).

The protein belongs to the CEP63 family. In terms of assembly, interacts with CEP152 and CDK1; these interactions recruit both ligands to centrosomes. Interacts with CDK2, CDK5RAP2, WDR62, CEP90, KIAA0753/moonraker and CCDC14. CEP63, CDK5RAP2, CEP152, WDR62 are proposed to form a stepwise assembled complex at the centrosome forming a ring near parental centrioles. Interacts with CCDC57; the interaction is required for their location to proximal end of centrioles. Interacts with FXR1; promoting its stabilization. Post-translationally, polyubiquitinated via 'Lys-48'-linked ubiquitin, leading to its degradation. Deubiquitinated by USP36, promoting its stabilization.

The protein localises to the cytoplasm. It localises to the cytoskeleton. Its subcellular location is the microtubule organizing center. The protein resides in the centrosome. It is found in the centriole. The protein localises to the centriolar satellite. Required for normal spindle assembly. Plays a key role in mother-centriole-dependent centriole duplication; the function also seems to involve CEP152, CDK5RAP2 and WDR62 through a stepwise assembled complex at the centrosome that recruits CDK2 required for centriole duplication. Reported to be required for centrosomal recruitment of CEP152; however, this function has been questioned. Also recruits CDK1 to centrosomes. Plays a role in DNA damage response. Following DNA damage, such as double-strand breaks (DSBs), is removed from centrosomes; this leads to the inactivation of spindle assembly and delay in mitotic progression. Promotes stabilization of FXR1 protein by inhibiting FXR1 ubiquitination. The protein is Centrosomal protein of 63 kDa of Mus musculus (Mouse).